Here is a 211-residue protein sequence, read N- to C-terminus: MNTIKILIGLLGIFLFSLSGIVSAQSDATTQLSQLLSNFRTYQAKFNQITFDGQDRVIQQSHGRVMIMRPGRFRWETDSPTKQIIITNGKTLWVYDVDLSQATQQPLAQKTNINPASLLSGSVKDLKQKFTITISPTSDAATFQLVPRLGKSLNFNWIRLKFSKKQLTEMTVLNNLDERSIFQFSQIKVNAPLSSTLFEFKPSRGIDVVKQ.

Positions Met-1–Ala-24 are cleaved as a signal peptide.

This sequence belongs to the LolA family. In terms of assembly, monomer.

Its subcellular location is the periplasm. In terms of biological role, participates in the translocation of lipoproteins from the inner membrane to the outer membrane. Only forms a complex with a lipoprotein if the residue after the N-terminal Cys is not an aspartate (The Asp acts as a targeting signal to indicate that the lipoprotein should stay in the inner membrane). The protein is Outer-membrane lipoprotein carrier protein of Coxiella burnetii (strain CbuK_Q154) (Coxiella burnetii (strain Q154)).